A 251-amino-acid chain; its full sequence is Segregation and condensation protein A (251 aa).

Belongs to the ScpA family. Component of a cohesin-like complex composed of ScpA, ScpB and the Smc homodimer, in which ScpA and ScpB bind to the head domain of Smc. The presence of the three proteins is required for the association of the complex with DNA.

The protein localises to the cytoplasm. Functionally, participates in chromosomal partition during cell division. May act via the formation of a condensin-like complex containing Smc and ScpB that pull DNA away from mid-cell into both cell halves. In Clostridium botulinum (strain Eklund 17B / Type B), this protein is Segregation and condensation protein A.